A 184-amino-acid chain; its full sequence is uncharacterized protein (184 aa).

This is an uncharacterized protein from Haemophilus influenzae (strain ATCC 51907 / DSM 11121 / KW20 / Rd).